The chain runs to 87 residues: Mu-theraphotoxin-Cg1a (87 aa).

A signal peptide spans 1 to 21 (MKVLVLITLAVLGAMFVWTSA). The propeptide occupies 22-50 (AELEERGSDQRDSPAWVKSMERIFQSEER). Disulfide bonds link Cys-52/Cys-66, Cys-59/Cys-71, and Cys-65/Cys-79.

Belongs to the neurotoxin 10 (Hwtx-1) family. 39 (Jztx-34) subfamily. Expressed by the venom gland.

It localises to the secreted. Functionally, potent and selective inhibitor of hNav1.7/SCN9A (IC(50)=610 nM). Also shows a weak activity towards Nav1.3/SCN3A (IC(50)=7950 nM). In addition, inhibits voltage-gated potassium channels (Kv) in rat DRG neurons. It does not alter the voltage dependence of activation, but it causes a small hyperpolarizing shift in the steady-state inactivations of Nav1.7/SNC9A. Chimera experiments show that the toxin binds to the DIIS3-S4 linker (site 4) of Nav1.7/SCN9A, whereas Nav1.7/SCN9A Asp-827 residue is shown by substitution experiments to be critical for its sensitivity. The toxin traps the domain II voltage sensor in the closed configuration, and not in an outward position. In vivo, shows analgesic activity in three rodent pain models (formalin-induced, acid-induced, and thermal). The sequence is that of Mu-theraphotoxin-Cg1a from Chilobrachys guangxiensis (Chinese earth tiger tarantula).